The sequence spans 854 residues: MAKIKKKEAKAKPLTRKEQRKQKSEFKKQNKRLYFAGKTNGTQRVAAAAEALAAQSQLGKNKKKKRSKKPKIINPDEIPKEQLLSGEIDSDDDESIDSDFSDAEVDALLPAREKMEVYEPLGKKVKKTTGGAIQRQDEEAVRRKELRQQKELESKSKKQRIKQLRIENEEDDREINKLEKKLKLNKSKDKNRLVRKMFNDGLDYLLDFVLDDEEEKRKWEEKQERKKKLKEQQEKEEAGMWSDEEEDKEDRDEPMDNFSEDDSGSEGEDDDEDLTGEEEQSEEDSEQEENAPKIKEDIYGRKRDAEGNILPDPVELEASAAGQKYIPPHQRALMAASAGSSEKQAEILARLLKQCKGLLNRLSEANLHKIAAGIEELYMKNSRYNMNETLTKLIQEALLGYTRTNERMVQEHMVLLAYLHAQVGSEIGAHFLQTFVELFDGYVKNIATLEVEDKQLNNLVLVLCYMYLFKIYELNLLMELIGKLSDQLCEKSVECLLLIFQSIGFRLRKDDPLAFKTMMQKVQSQIASAPLELKENPRLRFMVDILNAVKNNNMQKLPQYDPELAENLRKRLKAMLKNDRYVVTLNITLEDLLRADKVGKWWIVGSAWTGNLDEMGSAKQKQDKNSSKSANGGFADQLLELARKQQMNTAERRNIFCIIMSAADYVDAFEKILHLSLKDQRAVAYVIIHCALNEKRANPYYAHLALKFCQFNRKYQLAFQFASWDRINDIEKLSKPQIRNLASFLQQVILAAGLQLSVLKVVDFMQLDKLSFYFMKEVMVRLLLANDEREIYQTFERVAKNTKLQQFKQSVRLFLQHFLLQEEQLDKLKLKDEDRQLLQQRVDHIDKLLAYVDL.

4 disordered regions span residues 1–38, 55–105, 120–161, and 217–306; these read MAKIKKKEAKAKPLTRKEQRKQKSEFKKQNKRLYFAGK, QSQL…DAEV, PLGK…KQRI, and RKWE…RDAE. A compositionally biased stretch (basic and acidic residues) spans 15–28; that stretch reads TRKEQRKQKSEFKK. Residues 60 to 71 are compositionally biased toward basic residues; sequence KNKKKKRSKKPK. The span at 88–105 shows a compositional bias: acidic residues; that stretch reads IDSDDDESIDSDFSDAEV. Composition is skewed to basic and acidic residues over residues 135–156 and 217–238; these read RQDEEAVRRKELRQQKELESKS and RKWEEKQERKKKLKEQQEKEEA. Over residues 242–289 the composition is skewed to acidic residues; it reads SDEEEDKEDRDEPMDNFSEDDSGSEGEDDDEDLTGEEEQSEEDSEQEE. Over residues 290–306 the composition is skewed to basic and acidic residues; the sequence is NAPKIKEDIYGRKRDAE. Residues 352–553 form the MIF4G domain; sequence LKQCKGLLNR…DILNAVKNNN (202 aa). Residues 650–764 form the MI domain; sequence AERRNIFCII…QLSVLKVVDF (115 aa).

Belongs to the CWC22 family.

Its subcellular location is the nucleus. The protein localises to the nucleolus. This Drosophila melanogaster (Fruit fly) protein is Nucleolar MIF4G domain-containing protein 1 homolog.